Reading from the N-terminus, the 209-residue chain is Thiamine-phosphate synthase (209 aa).

4-amino-2-methyl-5-(diphosphooxymethyl)pyrimidine is bound by residues 35–39 (QLRNK) and asparagine 67. The Mg(2+) site is built by aspartate 68 and aspartate 87. Serine 106 is a binding site for 4-amino-2-methyl-5-(diphosphooxymethyl)pyrimidine. Residue 132–134 (TGS) coordinates 2-[(2R,5Z)-2-carboxy-4-methylthiazol-5(2H)-ylidene]ethyl phosphate. Lysine 135 is a 4-amino-2-methyl-5-(diphosphooxymethyl)pyrimidine binding site. Residues glycine 163 and 183–184 (IS) each bind 2-[(2R,5Z)-2-carboxy-4-methylthiazol-5(2H)-ylidene]ethyl phosphate.

Belongs to the thiamine-phosphate synthase family. Mg(2+) is required as a cofactor.

The catalysed reaction is 2-[(2R,5Z)-2-carboxy-4-methylthiazol-5(2H)-ylidene]ethyl phosphate + 4-amino-2-methyl-5-(diphosphooxymethyl)pyrimidine + 2 H(+) = thiamine phosphate + CO2 + diphosphate. It carries out the reaction 2-(2-carboxy-4-methylthiazol-5-yl)ethyl phosphate + 4-amino-2-methyl-5-(diphosphooxymethyl)pyrimidine + 2 H(+) = thiamine phosphate + CO2 + diphosphate. It catalyses the reaction 4-methyl-5-(2-phosphooxyethyl)-thiazole + 4-amino-2-methyl-5-(diphosphooxymethyl)pyrimidine + H(+) = thiamine phosphate + diphosphate. Its pathway is cofactor biosynthesis; thiamine diphosphate biosynthesis; thiamine phosphate from 4-amino-2-methyl-5-diphosphomethylpyrimidine and 4-methyl-5-(2-phosphoethyl)-thiazole: step 1/1. Functionally, condenses 4-methyl-5-(beta-hydroxyethyl)thiazole monophosphate (THZ-P) and 2-methyl-4-amino-5-hydroxymethyl pyrimidine pyrophosphate (HMP-PP) to form thiamine monophosphate (TMP). This Chlorobium phaeovibrioides (strain DSM 265 / 1930) (Prosthecochloris vibrioformis (strain DSM 265)) protein is Thiamine-phosphate synthase.